The chain runs to 377 residues: MGLQSAAAHFINRFIIWITIFMVACFLLRLLVVLDLNKRVYNHTPGPCRVLTDNYKGTAGMTYVESQKRVYITLGYGRAHDLKTKTGIAFYKTNRTDGRSQQEMYDLIEMTINWNGYEYKKEFIPTGIDSYSSSNGRVLLYVINAHPNHQCIHFFQIVESSKLNHRKAICDPSFSSLQDIAVVGPDRLFVTNMAAFGRGWAQILEFSLQTGQGAVYYYDGSKLSTAASSLIAPTGIGYDAKRRILYVGSMIRESIFAYKVAKDTTLELLYEMMLLTSPIGVFVESKTGDIWIAAHPVIHESAWHYTHPENQNIHSPSQILRIRIQEEGNSWVTTEPYANDGATISASSSVVFTDEQMLIGSSFGRLLHCDLTHSYIT.

At 1–13 the chain is on the cytoplasmic side; that stretch reads MGLQSAAAHFINR. The helical transmembrane segment at 14 to 34 threads the bilayer; it reads FIIWITIFMVACFLLRLLVVL. Topologically, residues 35–377 are extracellular; sequence DLNKRVYNHT…HCDLTHSYIT (343 aa). C48 and C369 are oxidised to a cystine. An N-linked (GlcNAc...) asparagine glycan is attached at N94.

It belongs to the paraoxonase family. As to quaternary structure, component of a non-voltage-gated amiloride-sensitive cation channel complex (also called the degenerin channel complex) composed of at least the mec-2, mec-4, mec-6 and mec-10 subunits; the complex mediates mechanotransduction in touch cells. Interacts with mec-2, mec-4 and mec-10. In terms of processing, glycosylated. In terms of tissue distribution, expressed in neurons including the six touch receptors, ventral cord motor neurons, HSN, PVD, PVC, IL1, and several neurons near the nerve ring, in the anal ganglion and in the male tail sensory rays, in muscles including the body wall, vulval, intestinal, anal depressor and sphincter muscles, and in the excretory canal.

The protein resides in the cell membrane. The protein localises to the cell projection. Its subcellular location is the axon. Its function is as follows. Subunit of an amiloride-sensitive cation channel (degenerin channel complex) permeable for sodium, potassium, lithium and N-methylglucamine, and required for mechanosensory transduction (touch sensitivity). Interacts with degenerin channel proteins and stabilizes the channel. Plays a role in mechanosensory transduction (touch sensitivity). The polypeptide is Mechanosensory abnormality protein 6 (Caenorhabditis elegans).